A 214-amino-acid polypeptide reads, in one-letter code: uncharacterized protein (214 aa).

Positions 2–118 (KIVIADDHHV…ELVKTRQVHG (117 aa)) constitute a Response regulatory domain. D53 carries the 4-aspartylphosphate modification. An HTH luxR-type domain is found at 142 to 207 (EKEKYYQLTR…QAALFAVKYN (66 aa)). Positions 166–185 (NKEIAAALFISEKTVKTHVS) form a DNA-binding region, H-T-H motif.

In terms of processing, phosphorylated by YhcY.

It is found in the cytoplasm. Member of the two-component regulatory system YhcY/YhcZ. This is an uncharacterized protein from Bacillus subtilis (strain 168).